We begin with the raw amino-acid sequence, 393 residues long: Transcription factor bHLH112 (393 aa).

Disordered regions lie at residues 248-277 (TRAQ…SPLP) and 332-356 (KQGA…NENH). Positions 254–265 (SLKRAKDNESAA) are enriched in basic and acidic residues. In terms of domain architecture, bHLH spans 270–319 (VTTPSPLPTFKVRKENLRDQITSLQQLVSPFGKTDTASVLQEAIEYIKFL). Low complexity predominate over residues 332–347 (KQGASNQQQQQISGKS).

Homodimer.

The protein localises to the nucleus. In Arabidopsis thaliana (Mouse-ear cress), this protein is Transcription factor bHLH112 (BHLH112).